A 141-amino-acid polypeptide reads, in one-letter code: Nucleoside triphosphatase NudI (141 aa).

A Nudix hydrolase domain is found at 1–141; it reads MRQRTIVCPL…RKTLRLKGLL (141 aa). Residues 38–59 carry the Nudix box motif; that stretch reads GGVEPGERIEEALRREIREELG.

The protein belongs to the Nudix hydrolase family. NudI subfamily. In terms of assembly, monomer. It depends on Mg(2+) as a cofactor.

It carries out the reaction a ribonucleoside 5'-triphosphate + H2O = a ribonucleoside 5'-phosphate + diphosphate + H(+). It catalyses the reaction a 2'-deoxyribonucleoside 5'-triphosphate + H2O = a 2'-deoxyribonucleoside 5'-phosphate + diphosphate + H(+). The enzyme catalyses dUTP + H2O = dUMP + diphosphate + H(+). The catalysed reaction is dTTP + H2O = dTMP + diphosphate + H(+). It carries out the reaction dCTP + H2O = dCMP + diphosphate + H(+). Functionally, catalyzes the hydrolysis of nucleoside triphosphates, with a preference for pyrimidine deoxynucleoside triphosphates (dUTP, dTTP and dCTP). The sequence is that of Nucleoside triphosphatase NudI from Escherichia coli O6:K15:H31 (strain 536 / UPEC).